We begin with the raw amino-acid sequence, 290 residues long: tRNA dimethylallyltransferase (290 aa).

9 to 16 (GPTASGKT) lines the ATP pocket. Position 11–16 (11–16 (TASGKT)) interacts with substrate. The interval 34–37 (DSTQ) is interaction with substrate tRNA.

This sequence belongs to the IPP transferase family. In terms of assembly, monomer. The cofactor is Mg(2+).

The enzyme catalyses adenosine(37) in tRNA + dimethylallyl diphosphate = N(6)-dimethylallyladenosine(37) in tRNA + diphosphate. Its function is as follows. Catalyzes the transfer of a dimethylallyl group onto the adenine at position 37 in tRNAs that read codons beginning with uridine, leading to the formation of N6-(dimethylallyl)adenosine (i(6)A). The polypeptide is tRNA dimethylallyltransferase (Phytoplasma australiense).